The following is a 266-amino-acid chain: Probable matrix protein (266 aa).

Positions alanine 158–proline 177 are disordered. Residues glutamate 167–proline 177 are compositionally biased toward acidic residues.

It localises to the virion. Its function is as follows. May play a role in virion budding and release by binding the ribonucleocapsid and the host membrane. The sequence is that of Probable matrix protein from Ixodidae (hardbacked ticks).